Reading from the N-terminus, the 443-residue chain is Crinkler effector protein 161 (443 aa).

Positions 1 to 17 (MVKLSCVIVGVPGDPFQ) are cleaved as a signal peptide. The LQLFLAK domain stretch occupies residues 18–56 (VEIDEICELVAGLKDAIKKEKPDSIKCDADKLQLFKAAK). The segment at 57–126 (EDRTFSASGA…GMESPSISQI (70 aa)) is DWL domain. Residues 127-133 (HVLVVLP) carry the HVLVXXP motif motif. Residues 134-439 (EDSESEGGTS…RSMPGYCCAN (306 aa)) are effector domain. Short sequence motifs (nuclear localization signal) lie at residues 161–170 (ADKKRKRYWH) and 384–393 (HQPLKRLKLS).

This sequence belongs to the Crinkler effector family.

The protein localises to the secreted. The protein resides in the host nucleus. Its function is as follows. Secreted effector that exhibits strong cell death suppression activity and suppresses cell death induced by a variety of effectors including CRN63, Avh241 and Avr3a. Protects host plants from biotic and abiotic stresses such as salinity and drought by up-regulation of many defense-related genes, including ABC transporters, Cytochrome P450 monooxygenases and receptor-like kinases (RLKs). Also enhances resistance to Phytophtora pathogens. The sequence is that of Crinkler effector protein 161 from Phytophthora sojae (strain P6497) (Soybean stem and root rot agent).